A 203-amino-acid polypeptide reads, in one-letter code: Recombination protein RecR (203 aa).

The C4-type zinc finger occupies 56–71 (CAVCGNVSDNERCRIC). The 101-residue stretch at 79–179 (SVVCIVEEPK…TVTRIASGLP (101 aa)) folds into the Toprim domain.

Belongs to the RecR family.

Functionally, may play a role in DNA repair. It seems to be involved in an RecBC-independent recombinational process of DNA repair. It may act with RecF and RecO. The sequence is that of Recombination protein RecR from Mycobacterium bovis (strain ATCC BAA-935 / AF2122/97).